The primary structure comprises 579 residues: Golvesin (579 aa).

The interval 1–75 is required for targeting to the plasma membrane; sequence MTSVNEHSLL…NNNNNNNNNN (75 aa). A disordered region spans residues 1–79; it reads MTSVNEHSLL…NNNNNNSNTG (79 aa). Residues 1-94 are Lumenal-facing; the sequence is MTSVNEHSLL…KKKKWNFRKK (94 aa). A compositionally biased stretch (low complexity) spans 11-77; sequence INNNENNDNN…NNNNNNNNSN (67 aa). Residues 95 to 115 form a helical; Signal-anchor for type III membrane protein membrane-spanning segment; sequence ILPMIVILIITAIVVCLVVFS. The segment at 95–118 is required for membrane targeting; that stretch reads ILPMIVILIITAIVVCLVVFSLPF. The Cytoplasmic segment spans residues 116–578; that stretch reads LPFDSSNTIY…SNDFVIAESP (463 aa). A required for transfer to endosomes and contractile vacuoles; the protein is trapped in the Golgi region spans residues 559–579; it reads WPSSKGIPGFSNDFVIAESPE.

Its subcellular location is the contractile vacuole membrane. It is found in the endosome membrane. The protein resides in the golgi apparatus membrane. The polypeptide is Golvesin (gol) (Dictyostelium discoideum (Social amoeba)).